The chain runs to 438 residues: 3-phosphoshikimate 1-carboxyvinyltransferase (438 aa).

Residues Lys-21, Ser-22, and Arg-26 each coordinate 3-phosphoshikimate. Residue Lys-21 participates in phosphoenolpyruvate binding. Residues Gly-93 and Arg-121 each coordinate phosphoenolpyruvate. Positions 166, 167, 168, 194, 324, and 351 each coordinate 3-phosphoshikimate. Gln-168 is a binding site for phosphoenolpyruvate. Asp-324 functions as the Proton acceptor in the catalytic mechanism. 2 residues coordinate phosphoenolpyruvate: Arg-355 and Arg-395.

Belongs to the EPSP synthase family. As to quaternary structure, monomer.

It is found in the cytoplasm. The catalysed reaction is 3-phosphoshikimate + phosphoenolpyruvate = 5-O-(1-carboxyvinyl)-3-phosphoshikimate + phosphate. Its pathway is metabolic intermediate biosynthesis; chorismate biosynthesis. Its function is as follows. Catalyzes the transfer of the enolpyruvyl moiety of phosphoenolpyruvate (PEP) to the 5-hydroxyl of shikimate-3-phosphate (S3P) to produce enolpyruvyl shikimate-3-phosphate and inorganic phosphate. The sequence is that of 3-phosphoshikimate 1-carboxyvinyltransferase from Methanobrevibacter smithii (strain ATCC 35061 / DSM 861 / OCM 144 / PS).